The sequence spans 174 residues: MNYFELFKFSPAFDIDTAVLAERYRELQRAVHPDKFAHDTEQQKLLSVQRTAQVNDGYQTLKDPIRRAEHLLSLRGIDLSHETTTVKDTVFLMQQMEWREALEDIRHSTDPQESIDELYQSFAEYRAKLTYMLTAQLNSSKDEDALLAADQVRKLKFMAKLHDELTRIEDALLD.

The J domain maps to N2–L74.

It belongs to the HscB family. Interacts with HscA and stimulates its ATPase activity.

Co-chaperone involved in the maturation of iron-sulfur cluster-containing proteins. Seems to help targeting proteins to be folded toward HscA. This is Co-chaperone protein HscB homolog from Shewanella sp. (strain W3-18-1).